A 1411-amino-acid chain; its full sequence is Protein RhsB (1411 aa).

Tandem repeats lie at residues 330–352 (GKQV…HRHT), 353–374 (GRPE…LNPA), 375–417 (GLSY…EHAD), 418–438 (GSVT…TDAA), 439–460 (GRTT…TTPD), 461–481 (GRAS…TGPD), 482–502 (GLEL…TAPD), 503–525 (GDIT…EDAT), 526–546 (GSRK…TDCS), 547–567 (GYVT…HREE), 568–588 (GLSQ…KDTQ), 589–609 (GHET…IAPD), 610–629 (GSRN…TTQG), 630–650 (GLTR…TSEN), 651–671 (GSHT…TGFD), 672–691 (GRTQ…SEDE), 692–711 (GLVT…RTVK), 712–734 (GETA…HISE), 735–758 (GHRV…QTVH), 808–828 (GDTP…LRSF), 829–850 (GRYE…HLNS), 851–871 (LLSD…ISSP), 872–894 (RQTR…TAAN), 895–930 (LDIR…NRIA), 931–959 (RDAH…VIRT), 960–984 (DDER…TQYE), 985–1019 (EPLV…MSLS), and 1162–1186 (GATA…HQLQ). The tract at residues 330-1186 (GKQVRSFTYD…LNEENPHQLQ (857 aa)) is 28 X approximate tandem repeats.

Belongs to the RHS family.

Rhs elements have a nonessential function. They may play an important role in the natural ecology of the cell. The polypeptide is Protein RhsB (rhsB) (Escherichia coli (strain K12)).